A 295-amino-acid polypeptide reads, in one-letter code: MEHQLLCCEVETIRRAYPDTNLLNDRVLRAMLKTEETCAPSVSYFKCVQREIVPSMRKIVATWMLEVCEEQKCEEEVFPLAMNYLDRFLSLEPLKKSRLQLLGATCMFVASKMKETIPLTAEKLCIYTDNSIRPEELLQMELLLVNKLKWNLAAMTPHDFIEHFLSKMPEADENKQIIRKHAQTFVALCATDVKFISNPPSMVAAGSVVAAMQGLNLGSPNNFLSCYRTTHFLSRVIKCDPDCLRACQEQIEALLESSLRQAQQNIDPKATEEEGEVEEEAGLACTPTDVRDVDI.

The region spanning 28 to 152 is the Cyclin N-terminal domain; sequence LRAMLKTEET…LLVNKLKWNL (125 aa). Lysine 269 participates in a covalent cross-link: Glycyl lysine isopeptide (Lys-Gly) (interchain with G-Cter in ubiquitin). The segment at 269 to 295 is disordered; sequence KATEEEGEVEEEAGLACTPTDVRDVDI. Position 286 is a phosphothreonine (threonine 286).

The protein belongs to the cyclin family. Cyclin D subfamily. As to quaternary structure, interacts with either CDK4 or CDK6 protein kinase to form a serine/threonine kinase holoenzyme complex. The cyclin subunit imparts substrate specificity to the complex. Component of the ternary complex CCND1/CDK4/CDKN1B required for nuclear translocation and modulation of CDK4-mediated kinase activity. Interacts directly with CDKN1B. Can form similar complexes with either CDKN1A or CDKN2A. Interacts with UHRF2; the interaction ubiquitinates CCND1 and appears to occur independently of phosphorylation. Interacts with USP2. Interacts (via cyclin N-terminal domain) with INSM1 (via N-terminal region); the interaction competes with the binding of CCND1 to CDK4 during cell cycle progression and inhibits CDK4 activity. Interacts with CDK4; the interaction is prevented with the binding of CCND1 to INSM1 during cell cycle progression. Phosphorylation at Thr-286 by MAP kinases is required for ubiquitination and degradation by the DCX(AMBRA1) complex. It also plays an essential role for recognition by the FBXO31 component of SCF (SKP1-cullin-F-box) protein ligase complex following DNA damage. Post-translationally, ubiquitinated at Lys-269 by the DCX(AMBRA1) complex during the transition from G1 to S cell phase, leading to its degradation: ubiquitination is dependent on Thr-286 phosphorylation. The DCX(AMBRA1) complex represents the major regulator of CCND1 stability during the G1/S transition. Also ubiquitinated by the SCF(FBXO4) and Cul7-RING(FBXW8) ubiquitin-protein ligase complexes. Following DNA damage it is ubiquitinated by the SCF(FBXO31) protein ligase complex. SCF(FBXO31) ubiquitination is dependent on Thr-286 phosphorylation. Ubiquitinated also by UHRF2 apparently in a phosphorylation-independent manner. Ubiquitination leads to its degradation and G1 arrest. Deubiquitinated by USP2; leading to its stabilization.

It is found in the nucleus. Its subcellular location is the cytoplasm. The protein localises to the nucleus membrane. Regulatory component of the cyclin D1-CDK4 (DC) complex that phosphorylates and inhibits members of the retinoblastoma (RB) protein family including RB1 and regulates the cell-cycle during G(1)/S transition. Phosphorylation of RB1 allows dissociation of the transcription factor E2F from the RB/E2F complex and the subsequent transcription of E2F target genes which are responsible for the progression through the G(1) phase. Hypophosphorylates RB1 in early G(1) phase. Cyclin D-CDK4 complexes are major integrators of various mitogenenic and antimitogenic signals. Also a substrate for SMAD3, phosphorylating SMAD3 in a cell-cycle-dependent manner and repressing its transcriptional activity. Component of the ternary complex, cyclin D1/CDK4/CDKN1B, required for nuclear translocation and activity of the cyclin D-CDK4 complex. Exhibits transcriptional corepressor activity with INSM1 on the NEUROD1 and INS promoters in a cell cycle-independent manner. The chain is G1/S-specific cyclin-D1 (Ccnd1) from Rattus norvegicus (Rat).